Reading from the N-terminus, the 872-residue chain is Dynein regulatory complex subunit 7 (872 aa).

Disordered regions lie at residues 1–40 (MEVL…REET), 231–281 (ESVK…QEEA), and 385–410 (EEED…KSFD). Positions 1–64 (MEVLKEKVEE…SEIEVSVPEK (64 aa)) form a coiled coil. 3 stretches are compositionally biased toward basic and acidic residues: residues 16–40 (REEA…REET), 231–240 (ESVKEEEKAP), and 248–281 (PPRD…QEEA). Residues 254 to 292 (SRFEQEQEMKRQEAIKAEEENRRKQEEARLLEQENAKTD) are a coiled coil. Residues 385–398 (EEEDEGMNDDDDVE) are compositionally biased toward acidic residues. Positions 399-409 (NLGKEDEDKSF) are enriched in basic and acidic residues. Coiled coils occupy residues 676–706 (LKNE…EEEE) and 780–805 (QRLI…KKQQ).

It belongs to the DRC7 family. As to quaternary structure, component of the nexin-dynein regulatory complex (N-DRC). Interacts with TCTE1/DRC5. Interacts with DRC3 and GAS8/DRC4.

It is found in the cell projection. The protein resides in the cilium. It localises to the flagellum. Its subcellular location is the cytoplasm. The protein localises to the cytoskeleton. It is found in the cilium axoneme. The protein resides in the flagellum axoneme. In terms of biological role, component of the nexin-dynein regulatory complex (N-DRC) a key regulator of ciliary/flagellar motility which maintains the alignment and integrity of the distal axoneme and regulates microtubule sliding in motile axonemes. Involved in the regulation of flagellar motility. Essential for male fertility, sperm head morphogenesis and sperm flagellum formation. The protein is Dynein regulatory complex subunit 7 (DRC7) of Bos taurus (Bovine).